The following is a 411-amino-acid chain: Imidazolonepropionase (411 aa).

Residues H75 and H77 each coordinate Fe(3+). Residues H75 and H77 each coordinate Zn(2+). Residues R84, Y147, and H180 each coordinate 4-imidazolone-5-propanoate. Y147 contacts N-formimidoyl-L-glutamate. Residue H245 participates in Fe(3+) binding. H245 contributes to the Zn(2+) binding site. Q248 lines the 4-imidazolone-5-propanoate pocket. Residue D320 coordinates Fe(3+). A Zn(2+)-binding site is contributed by D320. Positions 322 and 324 each coordinate N-formimidoyl-L-glutamate. T325 lines the 4-imidazolone-5-propanoate pocket.

The protein belongs to the metallo-dependent hydrolases superfamily. HutI family. The cofactor is Zn(2+). Fe(3+) serves as cofactor.

It localises to the cytoplasm. It carries out the reaction 4-imidazolone-5-propanoate + H2O = N-formimidoyl-L-glutamate. It functions in the pathway amino-acid degradation; L-histidine degradation into L-glutamate; N-formimidoyl-L-glutamate from L-histidine: step 3/3. Catalyzes the hydrolytic cleavage of the carbon-nitrogen bond in imidazolone-5-propanoate to yield N-formimidoyl-L-glutamate. It is the third step in the universal histidine degradation pathway. The protein is Imidazolonepropionase of Photobacterium profundum (strain SS9).